The primary structure comprises 499 residues: Glycerol kinase (499 aa).

Threonine 12 provides a ligand contact to ADP. 3 residues coordinate ATP: threonine 12, threonine 13, and serine 14. Threonine 12 contacts sn-glycerol 3-phosphate. Residue arginine 16 coordinates ADP. Positions 82, 83, 134, and 243 each coordinate sn-glycerol 3-phosphate. Positions 82, 83, 134, 243, and 244 each coordinate glycerol. Threonine 265 and glycine 308 together coordinate ADP. The ATP site is built by threonine 265, glycine 308, glutamine 312, and glycine 409. ADP contacts are provided by glycine 409 and asparagine 413.

The protein belongs to the FGGY kinase family. Homotetramer and homodimer (in equilibrium).

The catalysed reaction is glycerol + ATP = sn-glycerol 3-phosphate + ADP + H(+). The protein operates within polyol metabolism; glycerol degradation via glycerol kinase pathway; sn-glycerol 3-phosphate from glycerol: step 1/1. Its activity is regulated as follows. Activated by phosphorylation and inhibited by fructose 1,6-bisphosphate (FBP). Key enzyme in the regulation of glycerol uptake and metabolism. Catalyzes the phosphorylation of glycerol to yield sn-glycerol 3-phosphate. In Lachnoclostridium phytofermentans (strain ATCC 700394 / DSM 18823 / ISDg) (Clostridium phytofermentans), this protein is Glycerol kinase.